The sequence spans 363 residues: Aminomethyltransferase (363 aa).

The protein belongs to the GcvT family. In terms of assembly, the glycine cleavage system is composed of four proteins: P, T, L and H.

The catalysed reaction is N(6)-[(R)-S(8)-aminomethyldihydrolipoyl]-L-lysyl-[protein] + (6S)-5,6,7,8-tetrahydrofolate = N(6)-[(R)-dihydrolipoyl]-L-lysyl-[protein] + (6R)-5,10-methylene-5,6,7,8-tetrahydrofolate + NH4(+). In terms of biological role, the glycine cleavage system catalyzes the degradation of glycine. The protein is Aminomethyltransferase of Nitrosomonas eutropha (strain DSM 101675 / C91 / Nm57).